The chain runs to 289 residues: MTINLTKFSLTILVALTLTACGSSGGSGDSQSAHTPSTSIHTQNNSTPNKNTSTPPVNVSNANNLEIKNNDKTGGAFIISGEDGHVTLKKVDITTNSDLNVLYIDGTKIPLSSPSIKSNGWLNIRSGTGKVSIDGIETSRDLKVCCGKYTDTRIGKVLSKNKNEDTYFFYNGNLTRNMPVGGTVNYNTGDSILSSYHDELGDTDEAVGTSQFSADFVNKKLTGSLSVNEKKLNINADISGNTFSGTTQSDAFKSQGIAEGKFYGENAKELGGLVKANDNSWSGAFAAKK.

The tract at residues 25–66 (GGSGDSQSAHTPSTSIHTQNNSTPNKNTSTPPVNVSNANNLE) is disordered. Residues 33-43 (AHTPSTSIHTQ) show a composition bias toward polar residues. Residues 44–59 (NNSTPNKNTSTPPVNV) are compositionally biased toward low complexity.

This is an uncharacterized protein from Haemophilus influenzae (strain ATCC 51907 / DSM 11121 / KW20 / Rd).